Consider the following 482-residue polypeptide: ATP synthase subunit beta (482 aa).

Residue 167 to 174 (GGAGVGKT) participates in ATP binding.

This sequence belongs to the ATPase alpha/beta chains family. In terms of assembly, F-type ATPases have 2 components, CF(1) - the catalytic core - and CF(0) - the membrane proton channel. CF(1) has five subunits: alpha(3), beta(3), gamma(1), delta(1), epsilon(1). CF(0) has three main subunits: a(1), b(2) and c(9-12). The alpha and beta chains form an alternating ring which encloses part of the gamma chain. CF(1) is attached to CF(0) by a central stalk formed by the gamma and epsilon chains, while a peripheral stalk is formed by the delta and b chains.

It localises to the cell membrane. It carries out the reaction ATP + H2O + 4 H(+)(in) = ADP + phosphate + 5 H(+)(out). Functionally, produces ATP from ADP in the presence of a proton gradient across the membrane. The catalytic sites are hosted primarily by the beta subunits. The chain is ATP synthase subunit beta from Corynebacterium aurimucosum (strain ATCC 700975 / DSM 44827 / CIP 107346 / CN-1) (Corynebacterium nigricans).